Reading from the N-terminus, the 448-residue chain is 3-phosphoshikimate 1-carboxyvinyltransferase (448 aa).

K28, S29, and R33 together coordinate 3-phosphoshikimate. K28 contacts phosphoenolpyruvate. 2 residues coordinate phosphoenolpyruvate: G100 and R128. S173, Q175, D326, and K353 together coordinate 3-phosphoshikimate. Position 175 (Q175) interacts with phosphoenolpyruvate. D326 serves as the catalytic Proton acceptor. The phosphoenolpyruvate site is built by R357 and R405.

This sequence belongs to the EPSP synthase family. Monomer.

The protein localises to the cytoplasm. It catalyses the reaction 3-phosphoshikimate + phosphoenolpyruvate = 5-O-(1-carboxyvinyl)-3-phosphoshikimate + phosphate. Its pathway is metabolic intermediate biosynthesis; chorismate biosynthesis; chorismate from D-erythrose 4-phosphate and phosphoenolpyruvate: step 6/7. Functionally, catalyzes the transfer of the enolpyruvyl moiety of phosphoenolpyruvate (PEP) to the 5-hydroxyl of shikimate-3-phosphate (S3P) to produce enolpyruvyl shikimate-3-phosphate and inorganic phosphate. The sequence is that of 3-phosphoshikimate 1-carboxyvinyltransferase from Sinorhizobium fredii (strain NBRC 101917 / NGR234).